The primary structure comprises 168 residues: Pleiotrophin (168 aa).

An N-terminal signal peptide occupies residues 1-32 (MQTPQFLQQRRKFAAAFLAFIFLLAVVDTAEA). 5 cysteine pairs are disulfide-bonded: C47–C76, C55–C85, C62–C89, C99–C131, and C109–C141. Chondroitin sulfate binding stretches follow at residues 92-99 (KKQFGAEC) and 123-131 (KRALHNADC). A disordered region spans residues 139–168 (KPCGKVTKPKPQAESKKKKKEGKKQEKMLD). The chondroitin sulfate A binding stretch occupies residues 147–168 (PKPQAESKKKKKEGKKQEKMLD).

The protein belongs to the pleiotrophin family. In terms of assembly, interacts with ALK and NEK6. Interacts with PTPRZ1 (via chondroitin sulfate groups); promotes formation of homooligomers; oligomerization impairs tyrosine phosphatase activity. Forms a complex with PTPRZ1 and CTNNB1; this complex inactivates PTPRZ1 protein tyrosine phosphatase activity through PTN interaction and stimulates tyrosine phosphorylation of CTNNB1. Interacts with ITGB3 and ITGA5. Forms a complex with PTPRZ1 and integrin alpha-V/beta-3 (ITGAV:ITGB3) that stimulates endothelial cell migration through ITGB3 'Tyr-773' phosphorylation. Interacts with SDC3 (via heparan sulfate chains); this interaction mediates the neurite outgrowth-promoting signal from PTN to the cytoskeleton of growing neurites; this interaction mediates osteoblast recruitment. Interacts with GPC2 (via heparan sulfate); this interaction promotes neurite outgrowth through binding of PTN with chondroitin sulfate of proteoglycans, thereby releasing PTPRS of chondroitin sulfate proteoglycans (CSPGs) and leading to binding with heparan sulfate of GPC2. Post-translationally, phosphorylated by NEK6.

Its subcellular location is the secreted. In terms of biological role, secreted growth factor that mediates its signal through cell-surface proteoglycan and non-proteoglycan receptors. Binds cell-surface proteoglycan receptor via their chondroitin sulfate (CS) groups. Thereby regulates many processes like cell proliferation, cell survival, cell growth, cell differentiation and cell migration in several tissues namely neuron and bone. Also plays a role in synaptic plasticity and learning-related behavior by inhibiting long-term synaptic potentiation. Binds PTPRZ1, leading to neutralization of the negative charges of the CS chains of PTPRZ1, inducing PTPRZ1 clustering, thereby causing the dimerization and inactivation of its phosphatase activity leading to increased tyrosine phosphorylation of each of the PTPRZ1 substrates like ALK, CTNNB1 or AFAP1L2 in order to activate the PI3K-AKT pathway. Through PTPRZ1 binding controls oligodendrocyte precursor cell differentiation by enhancing the phosphorylation of AFAP1L2 in order to activate the PI3K-AKT pathway. Forms a complex with PTPRZ1 and integrin alpha-V/beta-3 (ITGAV:ITGB3) that stimulates endothelial cell migration through SRC dephosphorylation and activation that consequently leads to ITGB3 'Tyr-773' phosphorylation. In adult hippocampus promotes dendritic arborization, spine development, and functional integration and connectivity of newborn granule neurons through ALK by activating AKT signaling pathway. Binds GPC2 and chondroitin sulfate proteoglycans (CSPGs) at the neuron surface, leading to abrogation of binding between PTPRS and CSPGs and neurite outgrowth promotion. Binds SDC3 and mediates bone formation by recruiting and attaching osteoblasts/osteoblast precursors to the sites for new bone deposition. Binds ALK and promotes cell survival and cell proliferation through MAPK pathway activation. Inhibits proliferation and enhances differentiation of neural stem cells by inhibiting FGF2-induced fibroblast growth factor receptor signaling pathway. Mediates regulatory mechanisms in normal hemostasis and in hematopoietic regeneration and in maintaining the balance of myeloid and lymphoid regeneration. In addition may play a role in the female reproductive system, auditory response and the progesterone-induced decidualization pathway. This is Pleiotrophin from Sus scrofa (Pig).